The sequence spans 340 residues: L-threonine 3-dehydrogenase (340 aa).

C38 lines the Zn(2+) pocket. Catalysis depends on charge relay system residues T40 and H43. H63, E64, C93, C96, C99, and C107 together coordinate Zn(2+). NAD(+)-binding positions include I175, D195, R200, 261–263, and 285–286; these read LGI and IY.

This sequence belongs to the zinc-containing alcohol dehydrogenase family. As to quaternary structure, homotetramer. Requires Zn(2+) as cofactor.

The protein resides in the cytoplasm. The catalysed reaction is L-threonine + NAD(+) = (2S)-2-amino-3-oxobutanoate + NADH + H(+). The protein operates within amino-acid degradation; L-threonine degradation via oxydo-reductase pathway; glycine from L-threonine: step 1/2. Its function is as follows. Catalyzes the NAD(+)-dependent oxidation of L-threonine to 2-amino-3-ketobutyrate. The sequence is that of L-threonine 3-dehydrogenase from Xanthomonas axonopodis pv. citri (strain 306).